A 240-amino-acid polypeptide reads, in one-letter code: Ribose-5-phosphate isomerase A (240 aa).

The tract at residues 1 to 23 is disordered; that stretch reads MKTSGGSDAAKRRAGESAAETVT. Substrate is bound by residues 32-35, 92-95, and 111-114; these read TGST, DGAD, and KGGG. E120 serves as the catalytic Proton acceptor. K138 provides a ligand contact to substrate.

This sequence belongs to the ribose 5-phosphate isomerase family. In terms of assembly, homodimer.

It catalyses the reaction aldehydo-D-ribose 5-phosphate = D-ribulose 5-phosphate. Its pathway is carbohydrate degradation; pentose phosphate pathway; D-ribose 5-phosphate from D-ribulose 5-phosphate (non-oxidative stage): step 1/1. Functionally, catalyzes the reversible conversion of ribose-5-phosphate to ribulose 5-phosphate. The polypeptide is Ribose-5-phosphate isomerase A (Halorubrum lacusprofundi (strain ATCC 49239 / DSM 5036 / JCM 8891 / ACAM 34)).